Consider the following 289-residue polypeptide: MAPKRQSAILPQPKKPRPAAAPKLEDKSASPGLPKGEKEQQEAIEHIDEVQNEIDRLNEQASEEILKVEQKYNKLRQPFFQKRSELIAKIPNFWVTTFVNHPQVSALLGEEDEEALHYLTRVEVTEFEDIKSGYRIDFYFDENPYFENKVLSKEFHLNESGDPSSKSTEIKWKSGKDLTKRSSQTQNKASRKRQHEEPESFFTWFTDHSDAGADELGEVIKDDIWPNPLQYYLVPDMDDEEGEAEDDDDDDEEEEGLEDIDEEGDEDEGEEDDDEDEGEEGEEDEGEDD.

Residues methionine 1–glutamate 45 form a disordered region. A N,N,N-trimethylalanine; by NTM1 modification is found at alanine 2. A Phosphoserine modification is found at serine 7. Proline 11 is subject to N6-acetyllysine. Phosphoserine is present on lysine 15. N6-acetyllysine is present on lysine 23. Lysine 23 is subject to Phosphothreonine. At serine 28 the chain carries Phosphoserine. Positions proline 31–glutamine 77 are dimerization. Residues lysine 35–glutamate 45 show a composition bias toward basic and acidic residues. A Phosphoserine modification is found at serine 62. Lysine 67 carries the post-translational modification N6-acetyllysine. The segment at proline 78–isoleucine 224 is earmuff domain. Tyrosine 145 is modified (phosphotyrosine). Lysine 149 is subject to N6-acetyllysine. A Glycyl lysine isopeptide (Lys-Gly) (interchain with G-Cter in ubiquitin) cross-link involves residue lysine 153. 2 disordered regions span residues leucine 157–threonine 206 and proline 235–aspartate 289. The segment covering threonine 168–lysine 180 has biased composition (basic and acidic residues). Lysine 171 is subject to N6-acetyllysine. Positions aspartate 236–aspartate 289 are enriched in acidic residues.

The protein belongs to the nucleosome assembly protein (NAP) family. Headphone-shaped homodimer. Isoform 1 and isoform 2 interact directly with each other and with ANP32A within the tripartite INHAT (inhibitor of acetyltransferases) complex. Isoform 1 and isoform 2 interact also with histones. Isoform 2 is a omponent of the SET complex, composed of at least ANP32A, APEX1, HMGB2, NME1, SET and TREX1, but not NME2 or TREX2. Within this complex, directly interacts with ANP32A, NME1, HMGB2 and TREX1; the interaction with ANP32A is enhanced after cleavage. Interacts with APBB1, CHTOP, SETBP1, SGO1. In terms of processing, some glutamate residues are glycylated by TTLL8. This modification occurs exclusively on glutamate residues and results in a glycine chain on the gamma-carboxyl group. Post-translationally, N-terminus of isoform 1 is methylated by METTL11A/NTM1. Mainly trimethylated. Cleaved after Lys-176 by GZMA. The cleavage inhibits its nucleosome assembly activity and disrupts the inhibition on NME1.

The protein resides in the cytoplasm. Its subcellular location is the cytosol. It is found in the endoplasmic reticulum. It localises to the nucleus. The protein localises to the nucleoplasm. In terms of biological role, multitasking protein, involved in apoptosis, transcription, nucleosome assembly and histone chaperoning. Isoform 2 anti-apoptotic activity is mediated by inhibition of the GZMA-activated DNase, NME1. In the course of cytotoxic T-lymphocyte (CTL)-induced apoptosis, GZMA cleaves SET, disrupting its binding to NME1 and releasing NME1 inhibition. Isoform 1 and isoform 2 are potent inhibitors of protein phosphatase 2A. Isoform 1 and isoform 2 inhibit EP300/CREBBP and PCAF-mediated acetylation of histones (HAT) and nucleosomes, most probably by masking the accessibility of lysines of histones to the acetylases. The predominant target for inhibition is histone H4. HAT inhibition leads to silencing of HAT-dependent transcription and prevents active demethylation of DNA. Both isoforms stimulate DNA replication of the adenovirus genome complexed with viral core proteins; however, isoform 2 specific activity is higher. The sequence is that of Protein SET (Set) from Mus musculus (Mouse).